Here is a 354-residue protein sequence, read N- to C-terminus: Ferrochelatase (354 aa).

Residues His-214 and Glu-295 each coordinate Fe cation.

Belongs to the ferrochelatase family.

It localises to the cytoplasm. It carries out the reaction heme b + 2 H(+) = protoporphyrin IX + Fe(2+). The protein operates within porphyrin-containing compound metabolism; protoheme biosynthesis; protoheme from protoporphyrin-IX: step 1/1. Functionally, catalyzes the ferrous insertion into protoporphyrin IX. The sequence is that of Ferrochelatase from Burkholderia orbicola (strain MC0-3).